Consider the following 184-residue polypeptide: ATP synthase subunit b, chloroplastic (184 aa).

Residues 27 to 49 form a helical membrane-spanning segment; it reads LATNPINLSVVLGVLIFFGKGVL.

This sequence belongs to the ATPase B chain family. In terms of assembly, F-type ATPases have 2 components, F(1) - the catalytic core - and F(0) - the membrane proton channel. F(1) has five subunits: alpha(3), beta(3), gamma(1), delta(1), epsilon(1). F(0) has four main subunits: a(1), b(1), b'(1) and c(10-14). The alpha and beta chains form an alternating ring which encloses part of the gamma chain. F(1) is attached to F(0) by a central stalk formed by the gamma and epsilon chains, while a peripheral stalk is formed by the delta, b and b' chains.

Its subcellular location is the plastid. It localises to the chloroplast thylakoid membrane. Functionally, f(1)F(0) ATP synthase produces ATP from ADP in the presence of a proton or sodium gradient. F-type ATPases consist of two structural domains, F(1) containing the extramembraneous catalytic core and F(0) containing the membrane proton channel, linked together by a central stalk and a peripheral stalk. During catalysis, ATP synthesis in the catalytic domain of F(1) is coupled via a rotary mechanism of the central stalk subunits to proton translocation. Its function is as follows. Component of the F(0) channel, it forms part of the peripheral stalk, linking F(1) to F(0). The protein is ATP synthase subunit b, chloroplastic of Nicotiana tomentosiformis (Tobacco).